Here is a 311-residue protein sequence, read N- to C-terminus: Acyl-CoA dehydrogenase IpdE2 (311 aa).

The FAD site is built by Arg-206 and Gly-273.

The protein belongs to the acyl-CoA dehydrogenase family. Heterotetramer composed of 2 IpdE1 subunits and 2 IpdE2 subunits. The cofactor is FAD.

The catalysed reaction is 3-[(3aS,4S,5R,7aS)-5-hydroxy-7a-methyl-1-oxo-octahydro-1H-inden-4-yl]propanoyl-CoA + A = (2E)-3-[(3aS,4S,5R,7aS)-5-hydroxy-7a-methyl-1-oxo-octahydro-1H-inden-4-yl]prop-2-enoyl-CoA + AH2. The protein operates within steroid metabolism; cholesterol degradation. Functionally, involved in cholesterol degradation. Catalyzes the dehydrogenation of 5OH-HIP-CoA to 5OH-HIPE-CoA. In Mycolicibacterium smegmatis (strain ATCC 700084 / mc(2)155) (Mycobacterium smegmatis), this protein is Acyl-CoA dehydrogenase IpdE2.